We begin with the raw amino-acid sequence, 191 residues long: Large ribosomal subunit protein uL6 (191 aa).

The protein belongs to the universal ribosomal protein uL6 family. As to quaternary structure, part of the 50S ribosomal subunit.

Its function is as follows. This protein binds to the 23S rRNA, and is important in its secondary structure. It is located near the subunit interface in the base of the L7/L12 stalk, and near the tRNA binding site of the peptidyltransferase center. This Gloeobacter violaceus (strain ATCC 29082 / PCC 7421) protein is Large ribosomal subunit protein uL6.